A 471-amino-acid chain; its full sequence is A-type ATP synthase subunit B (471 aa).

It belongs to the ATPase alpha/beta chains family. Has multiple subunits with at least A(3), B(3), C, D, E, F, H, I and proteolipid K(x).

The protein localises to the cell membrane. Functionally, component of the A-type ATP synthase that produces ATP from ADP in the presence of a proton gradient across the membrane. The B chain is a regulatory subunit. The protein is A-type ATP synthase subunit B of Natronomonas pharaonis (strain ATCC 35678 / DSM 2160 / CIP 103997 / JCM 8858 / NBRC 14720 / NCIMB 2260 / Gabara) (Halobacterium pharaonis).